The primary structure comprises 542 residues: Delta 8-(E)-sphingolipid desaturase (542 aa).

The region spanning 1–75 (MVVSREEVRE…FKRWSIGRVK (75 aa)) is the Cytochrome b5 heme-binding domain. The heme site is built by H35 and H58. The next 2 membrane-spanning stretches (helical) occupy residues 215–235 (WYTL…FIAH) and 248–268 (IDNI…LGWW). The short motif at 235 to 239 (HDAGH) is the Histidine box-1 element. The Histidine box-2 signature appears at 272 to 276 (HNVHH). The next 3 membrane-spanning stretches (helical) occupy residues 329-346 (LYYP…RLSW), 360-380 (AAWF…WFFY), and 393-413 (FWFL…IVLS). The short motif at 455–459 (QAIHH) is the Histidine box-3 element.

Belongs to the fatty acid desaturase type 1 family.

It localises to the membrane. It catalyses the reaction an N-acylsphing-4-enine + 2 Fe(II)-[cytochrome b5] + O2 + 2 H(+) = a (4E,8E)-4-sphinga-4,8-dienine ceramide + 2 Fe(III)-[cytochrome b5] + 2 H2O. Its pathway is lipid metabolism; sphingolipid metabolism. In terms of biological role, delta(8)-fatty-acid desaturase which introduces a double bond at the 8-position in the long-chain base (LCB) of ceramides. Required for the formation of the di-unsaturated sphingoid base (E,E)-sphinga-4,8-dienine during glucosylceramide (GluCer) biosynthesis. The sequence is that of Delta 8-(E)-sphingolipid desaturase from Komagataella phaffii (strain GS115 / ATCC 20864) (Yeast).